The chain runs to 300 residues: Ribosomal protein L11 methyltransferase (300 aa).

S-adenosyl-L-methionine contacts are provided by T152, G173, D195, and N234.

It belongs to the methyltransferase superfamily. PrmA family.

It localises to the cytoplasm. The enzyme catalyses L-lysyl-[protein] + 3 S-adenosyl-L-methionine = N(6),N(6),N(6)-trimethyl-L-lysyl-[protein] + 3 S-adenosyl-L-homocysteine + 3 H(+). In terms of biological role, methylates ribosomal protein L11. The chain is Ribosomal protein L11 methyltransferase from Paraburkholderia phytofirmans (strain DSM 17436 / LMG 22146 / PsJN) (Burkholderia phytofirmans).